The primary structure comprises 185 residues: ATP synthase subunit delta, chloroplastic (185 aa).

The protein belongs to the ATPase delta chain family. F-type ATPases have 2 components, F(1) - the catalytic core - and F(0) - the membrane proton channel. F(1) has five subunits: alpha(3), beta(3), gamma(1), delta(1), epsilon(1). CF(0) has four main subunits: a(1), b(1), b'(1) and c(10-14). The alpha and beta chains form an alternating ring which encloses part of the gamma chain. F(1) is attached to F(0) by a central stalk formed by the gamma and epsilon chains, while a peripheral stalk is formed by the delta, b and b' chains.

It is found in the plastid. It localises to the chloroplast thylakoid membrane. Its function is as follows. F(1)F(0) ATP synthase produces ATP from ADP in the presence of a proton or sodium gradient. F-type ATPases consist of two structural domains, F(1) containing the extramembraneous catalytic core and F(0) containing the membrane proton channel, linked together by a central stalk and a peripheral stalk. During catalysis, ATP synthesis in the catalytic domain of F(1) is coupled via a rotary mechanism of the central stalk subunits to proton translocation. Functionally, this protein is part of the stalk that links CF(0) to CF(1). It either transmits conformational changes from CF(0) to CF(1) or is implicated in proton conduction. The chain is ATP synthase subunit delta, chloroplastic from Guillardia theta (Cryptophyte).